Here is a 689-residue protein sequence, read N- to C-terminus: Small ribosomal subunit protein mS39 (689 aa).

The N-terminal 37 residues, 1-37 (MAVVSAVRWLGLRSRLGQPLTGRRAGLCEQARSCRFY), are a transit peptide targeting the mitochondrion. N6-acetyllysine is present on Lys-126. PPR repeat units follow at residues 149–183 (IKDI…GTTV), 184–219 (SLET…EALE), 255–289 (NEHS…RLHA), 290–330 (DVYT…KVKP), 331–367 (NLQT…GIEP), 368–409 (SLAT…SPKD), 412–446 (DDKF…DNWK), 454–488 (RNFY…AYFP), 489–523 (HSQT…GHTF), and 572–606 (PATS…NKIP). The segment at 665 to 689 (NLTALTSDSDTDSSSDSDSDTSEGK) is disordered. Over residues 673–689 (SDTDSSSDSDSDTSEGK) the composition is skewed to acidic residues.

The protein belongs to the mitochondrion-specific ribosomal protein mS39 family. In terms of assembly, component of the mitochondrial small ribosomal subunit (mt-SSU). Mature mammalian 55S mitochondrial ribosomes consist of a small (28S) and a large (39S) subunit. The 28S small subunit contains a 12S ribosomal RNA (12S mt-rRNA) and 30 different proteins. The 39S large subunit contains a 16S rRNA (16S mt-rRNA), a copy of mitochondrial valine transfer RNA (mt-tRNA(Val)), which plays an integral structural role, and 52 different proteins. Associated with the 12S mitochondrial rRNA (12S mt-rRNA). Abundant in testes, skeletal muscle and heart tissue.

The protein localises to the mitochondrion. Functionally, mitochondrial RNA-binding protein that has a role in mitochondrial translation. The chain is Small ribosomal subunit protein mS39 (PTCD3) from Homo sapiens (Human).